Here is a 499-residue protein sequence, read N- to C-terminus: Proline--tRNA ligase (499 aa).

Residues 1 to 17 (MTKDGGKKDNQGQDKKA) are compositionally biased toward basic and acidic residues. Residues 1-21 (MTKDGGKKDNQGQDKKAQQYG) are disordered.

This sequence belongs to the class-II aminoacyl-tRNA synthetase family. ProS type 3 subfamily. As to quaternary structure, homodimer.

It localises to the cytoplasm. It carries out the reaction tRNA(Pro) + L-proline + ATP = L-prolyl-tRNA(Pro) + AMP + diphosphate. In terms of biological role, catalyzes the attachment of proline to tRNA(Pro) in a two-step reaction: proline is first activated by ATP to form Pro-AMP and then transferred to the acceptor end of tRNA(Pro). Can inadvertently accommodate and process cysteine. This Deinococcus radiodurans (strain ATCC 13939 / DSM 20539 / JCM 16871 / CCUG 27074 / LMG 4051 / NBRC 15346 / NCIMB 9279 / VKM B-1422 / R1) protein is Proline--tRNA ligase (proS).